The primary structure comprises 347 residues: D-alanine--D-alanine ligase (347 aa).

Residues 131–333 form the ATP-grasp domain; that stretch reads KRVLESAGIA…YPELIERLVD (203 aa). 161–216 contributes to the ATP binding site; sequence EEKLAYPVFTKPSNMGSSVGISKSENQEELRQALKLAFRYDSRVLVEQGVNAREIE. Mg(2+) contacts are provided by Asp287, Glu300, and Asn302.

Belongs to the D-alanine--D-alanine ligase family. Requires Mg(2+) as cofactor. Mn(2+) serves as cofactor.

It localises to the cytoplasm. It catalyses the reaction 2 D-alanine + ATP = D-alanyl-D-alanine + ADP + phosphate + H(+). Its pathway is cell wall biogenesis; peptidoglycan biosynthesis. Its function is as follows. Cell wall formation. This chain is D-alanine--D-alanine ligase, found in Streptococcus pneumoniae (strain ATCC BAA-255 / R6).